The sequence spans 429 residues: Adenylosuccinate synthetase (429 aa).

Residues 12–18 (GDEGKGK) and 40–42 (GHT) each bind GTP. Residue Asp-13 is the Proton acceptor of the active site. Residues Asp-13 and Gly-40 each coordinate Mg(2+). Residues 13–16 (DEGK), 38–41 (NAGH), Thr-128, Arg-142, Gln-223, and Arg-302 contribute to the IMP site. His-41 acts as the Proton donor in catalysis. 298–304 (TVTGRPR) is a substrate binding site. GTP-binding positions include Arg-304, 330–332 (LLD), and 412–414 (SVG).

Belongs to the adenylosuccinate synthetase family. In terms of assembly, homodimer. Requires Mg(2+) as cofactor.

It is found in the cytoplasm. It carries out the reaction IMP + L-aspartate + GTP = N(6)-(1,2-dicarboxyethyl)-AMP + GDP + phosphate + 2 H(+). It participates in purine metabolism; AMP biosynthesis via de novo pathway; AMP from IMP: step 1/2. Functionally, plays an important role in the de novo pathway of purine nucleotide biosynthesis. Catalyzes the first committed step in the biosynthesis of AMP from IMP. The polypeptide is Adenylosuccinate synthetase (Lactobacillus delbrueckii subsp. bulgaricus (strain ATCC 11842 / DSM 20081 / BCRC 10696 / JCM 1002 / NBRC 13953 / NCIMB 11778 / NCTC 12712 / WDCM 00102 / Lb 14)).